A 257-amino-acid chain; its full sequence is Type III pantothenate kinase (257 aa).

6–13 is an ATP binding site; the sequence is DVGNTSTK. Residue 109-112 coordinates substrate; it reads GADR. Aspartate 111 (proton acceptor) is an active-site residue. Aspartate 132 contributes to the K(+) binding site. Position 135 (threonine 135) interacts with ATP. Threonine 187 is a binding site for substrate.

This sequence belongs to the type III pantothenate kinase family. As to quaternary structure, homodimer. Requires NH4(+) as cofactor. K(+) serves as cofactor.

The protein localises to the cytoplasm. The catalysed reaction is (R)-pantothenate + ATP = (R)-4'-phosphopantothenate + ADP + H(+). Its pathway is cofactor biosynthesis; coenzyme A biosynthesis; CoA from (R)-pantothenate: step 1/5. Functionally, catalyzes the phosphorylation of pantothenate (Pan), the first step in CoA biosynthesis. The protein is Type III pantothenate kinase of Anaplasma marginale (strain Florida).